The following is a 1345-amino-acid chain: Aldehyde oxidase 2 (1345 aa).

The 2Fe-2S ferredoxin-type domain occupies 9–96; the sequence is DDLEFFVNGR…GAAVTTVEGV (88 aa). [2Fe-2S] cluster contacts are provided by Cys48, Cys53, Cys56, and Cys78. Gln117 is a binding site for Mo-molybdopterin. 4 residues coordinate [2Fe-2S] cluster: Cys118, Cys121, Cys153, and Cys155. Cys155 contacts Mo-molybdopterin. The FAD-binding PCMH-type domain occupies 238–423; it reads FYGERITWIA…GSVYIPHSQK (186 aa). Residues 266 to 273, Ala347, Ser356, His360, Asp369, and Leu413 contribute to the FAD site; that span reads LISGNTAL. Mo-molybdopterin contacts are provided by residues 812–813, 1094–1097, Gln1209, and Leu1274; these read GF and ASVG. Residue Glu1276 is the Proton acceptor; for azaheterocycle hydroxylase activity of the active site.

Belongs to the xanthine dehydrogenase family. Homodimer. It depends on [2Fe-2S] cluster as a cofactor. FAD is required as a cofactor. Requires Mo-molybdopterin as cofactor. As to expression, expressed in olfactory mucosa epithelium (at protein level). Detected in skin.

The protein localises to the cytoplasm. The enzyme catalyses an aldehyde + O2 + H2O = a carboxylate + H2O2 + H(+). In terms of biological role, oxidase with broad substrate specificity, oxidizing aromatic azaheterocycles, such as phthalazine, as well as aldehydes, such as benzaldehyde and retinal. Cannot use hypoxanthine as substrate. The protein is Aldehyde oxidase 2 (Aox2) of Mus musculus (Mouse).